The chain runs to 373 residues: Chorismate synthase (373 aa).

Position 46 (R46) interacts with NADP(+). FMN-binding positions include 123-125, 251-252, G295, 310-314, and R337; these read RSS, NA, and KPTPS.

This sequence belongs to the chorismate synthase family. The cofactor is FMNH2.

It catalyses the reaction 5-O-(1-carboxyvinyl)-3-phosphoshikimate = chorismate + phosphate. Its pathway is metabolic intermediate biosynthesis; chorismate biosynthesis; chorismate from D-erythrose 4-phosphate and phosphoenolpyruvate: step 7/7. In terms of biological role, catalyzes the anti-1,4-elimination of the C-3 phosphate and the C-6 proR hydrogen from 5-enolpyruvylshikimate-3-phosphate (EPSP) to yield chorismate, which is the branch point compound that serves as the starting substrate for the three terminal pathways of aromatic amino acid biosynthesis. This reaction introduces a second double bond into the aromatic ring system. The polypeptide is Chorismate synthase (Methanococcus maripaludis (strain DSM 14266 / JCM 13030 / NBRC 101832 / S2 / LL)).